The chain runs to 740 residues: ATP-dependent zinc metalloprotease YME1L (740 aa).

Over 1–256 (MFSTTTHSVP…KSGKTMKYLK (256 aa)) the chain is Mitochondrial matrix. The chain crosses the membrane as a helical span at residues 257–277 (TLQTIVVIVVFLGIFLSFFTT). The Mitochondrial intermembrane portion of the chain corresponds to 278–740 (SNGSVFRSIQ…IKAILNESQT (463 aa)). An ATP-binding site is contributed by 347 to 351 (GTGKT). Histidine 563 contacts Zn(2+). Glutamate 564 is a catalytic residue. Residues histidine 567 and aspartate 641 each contribute to the Zn(2+) site.

This sequence in the N-terminal section; belongs to the AAA ATPase family. It in the C-terminal section; belongs to the peptidase M41 family. It depends on Zn(2+) as a cofactor.

The protein resides in the mitochondrion inner membrane. Functionally, ATP-dependent metalloprotease that catalyzes the degradation of folded and unfolded proteins with a suitable degron sequence in the mitochondrial intermembrane region. Plays an important role in regulating mitochondrial morphology and function by cleaving Opa1, giving rise to a form of Opa1 that promotes maintenance of normal mitochondrial structure and mitochondrial protein metabolism. Ensures cell proliferation, maintains normal cristae morphology and complex I respiration activity, promotes antiapoptotic activity and protects mitochondria from the accumulation of oxidatively damaged membrane proteins. Required to control the accumulation of nonassembled respiratory chain subunits such as ND-30. This is ATP-dependent zinc metalloprotease YME1L from Drosophila melanogaster (Fruit fly).